Reading from the N-terminus, the 141-residue chain is Hemoglobin subunit beta (141 aa).

Residues 2–141 enclose the Globin domain; it reads HWSEVELHEI…VVDAISKEYH (140 aa). Positions 58 and 87 each coordinate heme b.

The protein belongs to the globin family. As to quaternary structure, heterotetramer of two alpha chains and two beta chains. As to expression, red blood cells.

Involved in oxygen transport from the lung to the various peripheral tissues. The protein is Hemoglobin subunit beta (HBB) of Heterodontus portusjacksoni (Port Jackson shark).